The sequence spans 155 residues: Small ribosomal subunit protein uS7c (155 aa).

The protein belongs to the universal ribosomal protein uS7 family. In terms of assembly, part of the 30S ribosomal subunit.

It localises to the plastid. The protein resides in the chloroplast. Functionally, one of the primary rRNA binding proteins, it binds directly to 16S rRNA where it nucleates assembly of the head domain of the 30S subunit. This chain is Small ribosomal subunit protein uS7c (rps7), found in Schisandra chinensis (Chinese magnolia vine).